The chain runs to 243 residues: uncharacterized protein (243 aa).

This sequence belongs to the methyltransferase superfamily.

This is an uncharacterized protein from Mycobacterium tuberculosis (strain CDC 1551 / Oshkosh).